The following is a 156-amino-acid chain: SsrA-binding protein (156 aa).

Residues 135–150 (KRDTIKDREWQRDRSR) are compositionally biased toward basic and acidic residues. Positions 135–156 (KRDTIKDREWQRDRSRIMKKNT) are disordered.

This sequence belongs to the SmpB family.

The protein resides in the cytoplasm. In terms of biological role, required for rescue of stalled ribosomes mediated by trans-translation. Binds to transfer-messenger RNA (tmRNA), required for stable association of tmRNA with ribosomes. tmRNA and SmpB together mimic tRNA shape, replacing the anticodon stem-loop with SmpB. tmRNA is encoded by the ssrA gene; the 2 termini fold to resemble tRNA(Ala) and it encodes a 'tag peptide', a short internal open reading frame. During trans-translation Ala-aminoacylated tmRNA acts like a tRNA, entering the A-site of stalled ribosomes, displacing the stalled mRNA. The ribosome then switches to translate the ORF on the tmRNA; the nascent peptide is terminated with the 'tag peptide' encoded by the tmRNA and targeted for degradation. The ribosome is freed to recommence translation, which seems to be the essential function of trans-translation. The protein is SsrA-binding protein of Legionella pneumophila (strain Corby).